A 94-amino-acid chain; its full sequence is MLKPLGDRVIISFVETEEKSVGGFVLAGASHDATKTAKVLAVGDGIRTLTGELVAPSVAEGDTVLVENDAGLEVKDGNEKVTVVRESDIVAVVK.

It belongs to the GroES chaperonin family. Heptamer of 7 subunits arranged in a ring. Interacts with the chaperonin GroEL.

Its subcellular location is the cytoplasm. In terms of biological role, together with the chaperonin GroEL, plays an essential role in assisting protein folding. The GroEL-GroES system forms a nano-cage that allows encapsulation of the non-native substrate proteins and provides a physical environment optimized to promote and accelerate protein folding. GroES binds to the apical surface of the GroEL ring, thereby capping the opening of the GroEL channel. This chain is Co-chaperonin GroES, found in Streptococcus agalactiae.